The primary structure comprises 66 residues: MVVMVKIVHAQTVLPENVLEELKRKTGENATKDAIAKAVEHYLMCPYTHEAPLEKRLEEVIKKKKK.

This is an uncharacterized protein from Archaeoglobus fulgidus (strain ATCC 49558 / DSM 4304 / JCM 9628 / NBRC 100126 / VC-16).